The chain runs to 1265 residues: 5-oxoprolinase (1265 aa).

It belongs to the oxoprolinase family. In terms of assembly, homodimer.

It localises to the cytoplasm. The protein localises to the cytosol. The catalysed reaction is 5-oxo-L-proline + ATP + 2 H2O = L-glutamate + ADP + phosphate + H(+). In terms of biological role, catalyzes the cleavage of 5-oxo-L-proline to form L-glutamate coupled to the hydrolysis of ATP to ADP and inorganic phosphate. The protein is 5-oxoprolinase (oplah) of Dictyostelium discoideum (Social amoeba).